Reading from the N-terminus, the 167-residue chain is Lipoprotein signal peptidase (167 aa).

3 helical membrane-spanning segments follow: residues 10–30 (LIWL…KAWV), 68–88 (WQMW…TFWL), and 98–118 (SALP…DRFL). Active-site residues include Asp-124 and Asp-142. Residues 138-158 (FNLADSAIVAGAIGIGLLSLF) form a helical membrane-spanning segment.

The protein belongs to the peptidase A8 family.

It is found in the cell inner membrane. The enzyme catalyses Release of signal peptides from bacterial membrane prolipoproteins. Hydrolyzes -Xaa-Yaa-Zaa-|-(S,diacylglyceryl)Cys-, in which Xaa is hydrophobic (preferably Leu), and Yaa (Ala or Ser) and Zaa (Gly or Ala) have small, neutral side chains.. It participates in protein modification; lipoprotein biosynthesis (signal peptide cleavage). Its function is as follows. This protein specifically catalyzes the removal of signal peptides from prolipoproteins. This chain is Lipoprotein signal peptidase, found in Xylella fastidiosa (strain 9a5c).